The following is a 269-amino-acid chain: Shikimate dehydrogenase (NADP(+)) (269 aa).

Shikimate-binding positions include 17-19 (SKS) and T64. Catalysis depends on K68, which acts as the Proton acceptor. D80 is an NADP(+) binding site. N89 and D105 together coordinate shikimate. NADP(+)-binding positions include 130-134 (GAGGA), 154-159 (NRTRAK), and M213. Position 215 (Y215) interacts with shikimate. G237 contacts NADP(+).

This sequence belongs to the shikimate dehydrogenase family. As to quaternary structure, homodimer.

The enzyme catalyses shikimate + NADP(+) = 3-dehydroshikimate + NADPH + H(+). It functions in the pathway metabolic intermediate biosynthesis; chorismate biosynthesis; chorismate from D-erythrose 4-phosphate and phosphoenolpyruvate: step 4/7. Involved in the biosynthesis of the chorismate, which leads to the biosynthesis of aromatic amino acids. Catalyzes the reversible NADPH linked reduction of 3-dehydroshikimate (DHSA) to yield shikimate (SA). This chain is Shikimate dehydrogenase (NADP(+)), found in Neisseria meningitidis serogroup C (strain 053442).